Reading from the N-terminus, the 325-residue chain is Malate dehydrogenase (325 aa).

11–17 (GAAGQIA) contacts NAD(+). Substrate contacts are provided by arginine 92 and arginine 98. NAD(+) contacts are provided by residues asparagine 105, glutamine 112, and 129 to 131 (VGN). Positions 131 and 162 each coordinate substrate. Histidine 187 serves as the catalytic Proton acceptor.

This sequence belongs to the LDH/MDH superfamily. MDH type 2 family.

The enzyme catalyses (S)-malate + NAD(+) = oxaloacetate + NADH + H(+). Catalyzes the reversible oxidation of malate to oxaloacetate. The polypeptide is Malate dehydrogenase (Methylococcus capsulatus (strain ATCC 33009 / NCIMB 11132 / Bath)).